The chain runs to 257 residues: NAD-capped RNA hydrolase NudC (257 aa).

Positions 25 and 69 each coordinate substrate. 2 residues coordinate Zn(2+): C98 and C101. E111 is a binding site for substrate. Residues C116 and C119 each contribute to the Zn(2+) site. Residue Y124 participates in substrate binding. Positions 125–248 (PQIAPCIIVA…TVARRLIEDT (124 aa)) constitute a Nudix hydrolase domain. The a divalent metal cation site is built by A158, E174, and E178. The short motif at 159–180 (GFVEVGETLEQAVAREVMEESG) is the Nudix box element. 192-199 (QPWPFPQS) is a binding site for substrate. E219 is a binding site for a divalent metal cation. A241 contacts substrate.

It belongs to the Nudix hydrolase family. NudC subfamily. As to quaternary structure, homodimer. Mg(2+) is required as a cofactor. Requires Mn(2+) as cofactor. Zn(2+) serves as cofactor.

The catalysed reaction is a 5'-end NAD(+)-phospho-ribonucleoside in mRNA + H2O = a 5'-end phospho-adenosine-phospho-ribonucleoside in mRNA + beta-nicotinamide D-ribonucleotide + 2 H(+). The enzyme catalyses NAD(+) + H2O = beta-nicotinamide D-ribonucleotide + AMP + 2 H(+). It carries out the reaction NADH + H2O = reduced beta-nicotinamide D-ribonucleotide + AMP + 2 H(+). In terms of biological role, mRNA decapping enzyme that specifically removes the nicotinamide adenine dinucleotide (NAD) cap from a subset of mRNAs by hydrolyzing the diphosphate linkage to produce nicotinamide mononucleotide (NMN) and 5' monophosphate mRNA. The NAD-cap is present at the 5'-end of some mRNAs and stabilizes RNA against 5'-processing. Has preference for mRNAs with a 5'-end purine. Catalyzes the hydrolysis of a broad range of dinucleotide pyrophosphates. The chain is NAD-capped RNA hydrolase NudC from Escherichia coli O157:H7.